The primary structure comprises 379 residues: Lipoyl synthase, mitochondrial (379 aa).

Residues C106, C111, C117, C137, C141, C144, and S352 each coordinate [4Fe-4S] cluster. One can recognise a Radical SAM core domain in the interval 122 to 341 (EHGTQTATIM…EERGNALGFL (220 aa)).

The protein belongs to the radical SAM superfamily. Lipoyl synthase family. Requires [4Fe-4S] cluster as cofactor.

The protein resides in the mitochondrion. It carries out the reaction [[Fe-S] cluster scaffold protein carrying a second [4Fe-4S](2+) cluster] + N(6)-octanoyl-L-lysyl-[protein] + 2 oxidized [2Fe-2S]-[ferredoxin] + 2 S-adenosyl-L-methionine + 4 H(+) = [[Fe-S] cluster scaffold protein] + N(6)-[(R)-dihydrolipoyl]-L-lysyl-[protein] + 4 Fe(3+) + 2 hydrogen sulfide + 2 5'-deoxyadenosine + 2 L-methionine + 2 reduced [2Fe-2S]-[ferredoxin]. It functions in the pathway protein modification; protein lipoylation via endogenous pathway; protein N(6)-(lipoyl)lysine from octanoyl-[acyl-carrier-protein]: step 2/2. Functionally, catalyzes the radical-mediated insertion of two sulfur atoms into the C-6 and C-8 positions of the octanoyl moiety bound to the lipoyl domains of lipoate-dependent enzymes, thereby converting the octanoylated domains into lipoylated derivatives. In Drosophila erecta (Fruit fly), this protein is Lipoyl synthase, mitochondrial.